The chain runs to 699 residues: Elongation factor G (699 aa).

The region spanning 8-283 (EHIRNIGICA…AVVDFLPSPI (276 aa)) is the tr-type G domain. Residues 17 to 24 (AHIDAGKT), 81 to 85 (DTPGH), and 135 to 138 (NKMD) contribute to the GTP site.

Belongs to the TRAFAC class translation factor GTPase superfamily. Classic translation factor GTPase family. EF-G/EF-2 subfamily.

The protein resides in the cytoplasm. In terms of biological role, catalyzes the GTP-dependent ribosomal translocation step during translation elongation. During this step, the ribosome changes from the pre-translocational (PRE) to the post-translocational (POST) state as the newly formed A-site-bound peptidyl-tRNA and P-site-bound deacylated tRNA move to the P and E sites, respectively. Catalyzes the coordinated movement of the two tRNA molecules, the mRNA and conformational changes in the ribosome. This is Elongation factor G from Rickettsia felis (strain ATCC VR-1525 / URRWXCal2) (Rickettsia azadi).